We begin with the raw amino-acid sequence, 117 residues long: Large ribosomal subunit protein bL17 (117 aa).

The protein belongs to the bacterial ribosomal protein bL17 family. As to quaternary structure, part of the 50S ribosomal subunit. Contacts protein L32.

The polypeptide is Large ribosomal subunit protein bL17 (Endomicrobium trichonymphae).